Here is a 200-residue protein sequence, read N- to C-terminus: NADH-quinone oxidoreductase subunit C (200 aa).

This sequence belongs to the complex I 30 kDa subunit family. As to quaternary structure, NDH-1 is composed of 14 different subunits. Subunits NuoB, C, D, E, F, and G constitute the peripheral sector of the complex.

It is found in the cell inner membrane. It carries out the reaction a quinone + NADH + 5 H(+)(in) = a quinol + NAD(+) + 4 H(+)(out). Its function is as follows. NDH-1 shuttles electrons from NADH, via FMN and iron-sulfur (Fe-S) centers, to quinones in the respiratory chain. The immediate electron acceptor for the enzyme in this species is believed to be ubiquinone. Couples the redox reaction to proton translocation (for every two electrons transferred, four hydrogen ions are translocated across the cytoplasmic membrane), and thus conserves the redox energy in a proton gradient. The protein is NADH-quinone oxidoreductase subunit C of Rhizobium rhizogenes (strain K84 / ATCC BAA-868) (Agrobacterium radiobacter).